Consider the following 268-residue polypeptide: Shikimate kinase (268 aa).

70–80 (PSGYGLKSSSA) lines the ATP pocket.

The protein belongs to the GHMP kinase family. Archaeal shikimate kinase subfamily.

It is found in the cytoplasm. The enzyme catalyses shikimate + ATP = 3-phosphoshikimate + ADP + H(+). The protein operates within metabolic intermediate biosynthesis; chorismate biosynthesis; chorismate from D-erythrose 4-phosphate and phosphoenolpyruvate: step 5/7. The polypeptide is Shikimate kinase (aroK) (Thermoplasma acidophilum (strain ATCC 25905 / DSM 1728 / JCM 9062 / NBRC 15155 / AMRC-C165)).